Consider the following 124-residue polypeptide: Small ribosomal subunit protein uS12 (124 aa).

Position 89 is a 3-methylthioaspartic acid (aspartate 89). The disordered stretch occupies residues 103–124 (DTAGVKDRRQSRSKYGAKSPKE).

It belongs to the universal ribosomal protein uS12 family. As to quaternary structure, part of the 30S ribosomal subunit. Contacts proteins S8 and S17. May interact with IF1 in the 30S initiation complex.

Functionally, with S4 and S5 plays an important role in translational accuracy. In terms of biological role, interacts with and stabilizes bases of the 16S rRNA that are involved in tRNA selection in the A site and with the mRNA backbone. Located at the interface of the 30S and 50S subunits, it traverses the body of the 30S subunit contacting proteins on the other side and probably holding the rRNA structure together. The combined cluster of proteins S8, S12 and S17 appears to hold together the shoulder and platform of the 30S subunit. This is Small ribosomal subunit protein uS12 from Prochlorococcus marinus (strain NATL1A).